Here is a 960-residue protein sequence, read N- to C-terminus: UvrABC system protein A (960 aa).

35–42 (GLSGSGKS) is a binding site for ATP. A C4-type zinc finger spans residues 270 to 297 (CAHCNVSVPELQPRLFSFNAPFGACPSC). 2 ABC transporter domains span residues 327-605 (FKPE…QASL) and 625-953 (GNGN…WYIK). 657-664 (GVSGSGKS) is a binding site for ATP. The C4-type zinc finger occupies 756–782 (CEHCKGDGVITIEMNFLPDVYITCDVC).

The protein belongs to the ABC transporter superfamily. UvrA family. In terms of assembly, forms a heterotetramer with UvrB during the search for lesions.

The protein resides in the cytoplasm. In terms of biological role, the UvrABC repair system catalyzes the recognition and processing of DNA lesions. UvrA is an ATPase and a DNA-binding protein. A damage recognition complex composed of 2 UvrA and 2 UvrB subunits scans DNA for abnormalities. When the presence of a lesion has been verified by UvrB, the UvrA molecules dissociate. In Treponema pallidum (strain Nichols), this protein is UvrABC system protein A.